Here is a 76-residue protein sequence, read N- to C-terminus: MNTATGFIVLLVLATVLGGIEAGESHMRKDAMGRVRRQYCVPVDQPCSLNTQPCCDDATCTQELNENDNTVYYCRA.

Positions 1–22 are cleaved as a signal peptide; that stretch reads MNTATGFIVLLVLATVLGGIEA. Residues 23–35 constitute a propeptide that is removed on maturation; the sequence is GESHMRKDAMGRV. 3 disulfide bridges follow: C40/C55, C47/C60, and C54/C74.

This sequence belongs to the neurotoxin 08 (Shiva) family. 02 (omega/kappa toxin) subfamily. Expressed by the venom gland.

The protein resides in the secreted. Its function is as follows. Toxin that may inhibit ion channels. The protein is Omega/kappa-hexatoxin-Ar1g of Atrax robustus (Sydney funnel-web spider).